Consider the following 381-residue polypeptide: Anti-sigma-I factor RsgI (381 aa).

The Cytoplasmic segment spans residues 1 to 63 (MRRGIIVEKN…FDFFKLRPFK (63 aa)). Residues 2 to 50 (RRGIIVEKNKKFVTLLTPDGQFLKAKNDRHSYEIGEEIMLPSETRMGRR) enclose the RsgI N-terminal anti-sigma domain. A helical membrane pass occupies residues 64–84 (MGIFTMTAIMLFIFIVLPVFS). Topologically, residues 85-381 (NNKAYAYMTI…NEDSPSAPGE (297 aa)) are extracellular. A disordered region spans residues 198-381 (SDMQTREKAK…NEDSPSAPGE (184 aa)). Composition is skewed to basic and acidic residues over residues 200-210 (MQTREKAKKEG), 219-244 (SNEK…QKSD), 273-321 (GDQK…DKGN), and 349-359 (SRRDNASDRRN).

Interacts (via RsgI N-terminal anti-sigma domain) with SigI.

It localises to the cell membrane. Functionally, anti-sigma factor for SigI. Negatively regulates SigI activity through direct interaction. The polypeptide is Anti-sigma-I factor RsgI (Bacillus subtilis (strain 168)).